The following is a 196-amino-acid chain: NADH dehydrogenase [ubiquinone] 1 alpha subcomplex assembly factor 3 (196 aa).

The transit peptide at 1–93 directs the protein to the mitochondrion; it reads MIARTLRTVG…RSVLSWNVNS (93 aa).

Belongs to the NDUFAF3 family. As to quaternary structure, together with NdufAF4 associates with mitochondrial complex I assembly intermediates during its biogenesis.

Its subcellular location is the mitochondrion. Involved in the assembly of mitochondrial NADH:ubiquinone oxidoreductase complex (complex I). Together with NdufAF4, involved in biogenesis of complex 1 modules N, Q and P-peripheral, but not the P-distal module. Required for recruitment of the complex I assembly factor Timmdc1 to complex 1 assembly intermediates. The protein is NADH dehydrogenase [ubiquinone] 1 alpha subcomplex assembly factor 3 of Drosophila melanogaster (Fruit fly).